Consider the following 450-residue polypeptide: Benzene 1,2-dioxygenase subunit alpha (450 aa).

The Rieske domain maps to 56-163 (LLGHETHIRK…VETYKGLIFA (108 aa)). The [2Fe-2S] cluster site is built by C96, H98, C116, and H119. Residues H222 and H228 each coordinate Fe cation.

This sequence belongs to the bacterial ring-hydroxylating dioxygenase alpha subunit family. This dioxygenase system consists of four proteins: the two subunits of the hydroxylase component (BedC1 and BedC2), a ferredoxin (BedB) and a ferredoxin reductase (BedA). It depends on [2Fe-2S] cluster as a cofactor. Requires Fe cation as cofactor.

It carries out the reaction benzene + NADH + O2 + H(+) = cis-1,2-dihydrobenzene-1,2-diol + NAD(+). The protein operates within aromatic compound metabolism; benzene degradation; catechol from benzene: step 1/2. The polypeptide is Benzene 1,2-dioxygenase subunit alpha (bedC1) (Pseudomonas putida (Arthrobacter siderocapsulatus)).